Reading from the N-terminus, the 150-residue chain is Transcriptional repressor NrdR (150 aa).

A zinc finger spans residues 3-34; it reads CPFCGQLDSKVVDSRPDKGGAAIRRRRECESC. The ATP-cone domain maps to 49-139; the sequence is PLVLKKDGRR…VYRSFKDVNE (91 aa).

Belongs to the NrdR family. It depends on Zn(2+) as a cofactor.

Negatively regulates transcription of bacterial ribonucleotide reductase nrd genes and operons by binding to NrdR-boxes. In Geobacter sulfurreducens (strain ATCC 51573 / DSM 12127 / PCA), this protein is Transcriptional repressor NrdR.